We begin with the raw amino-acid sequence, 116 residues long: Protein RALF-like 33 (116 aa).

The N-terminal stretch at Met-1–Ala-23 is a signal peptide. The propeptide at Ala-24–Leu-67 is removed in mature form. The N-linked (GlcNAc...) asparagine glycan is linked to Asn-41. 2 disulfides stabilise this stretch: Cys-85–Cys-95 and Cys-108–Cys-114.

Belongs to the plant rapid alkalinization factor (RALF) family. Post-translationally, proteolytically cleaved, probably by S1P, a subtilisin-like serine protease (subtilase). As to expression, expressed in roots, stems, leaves and plants.

It localises to the secreted. Functionally, cell signaling peptide that may regulate plant stress, growth, and development. Mediates a rapid alkalinization of extracellular space by mediating a transient increase in the cytoplasmic Ca(2+) concentration leading to a calcium-dependent signaling events through a cell surface receptor and a concomitant activation of some intracellular mitogen-activated protein kinases. The polypeptide is Protein RALF-like 33 (RALFL33) (Arabidopsis thaliana (Mouse-ear cress)).